The following is a 409-amino-acid chain: Peptide chain release factor subunit 1 (409 aa).

The protein belongs to the eukaryotic release factor 1 family. In terms of assembly, heterodimer of two subunits, one of which binds GTP.

Its subcellular location is the cytoplasm. Its function is as follows. Directs the termination of nascent peptide synthesis (translation) in response to the termination codons UAA, UAG and UGA. This chain is Peptide chain release factor subunit 1, found in Methanopyrus kandleri (strain AV19 / DSM 6324 / JCM 9639 / NBRC 100938).